Consider the following 1430-residue polypeptide: Bromodomain-containing protein homolog (1430 aa).

Residues 23–49 (FACPVRGCDRSYKTIMGLQYHLMKYDH) form a C2H2-type zinc finger. A disordered region spans residues 51 to 111 (NPQPLTPVLT…AGGGSASGVS (61 aa)). The segment covering 62–81 (SRKKARSRSGGHHSTPRPHK) has biased composition (basic residues). Residues 283-333 (DAVCCICLDGECQNTNVILFCDMCNLAVHQDCYGVPYIPEGQWLCRRCLQS) form a PHD-type 1 zinc finger. Zn(2+) contacts are provided by Cys286, Cys289, Cys303, Cys306, His311, Cys314, Cys327, and Cys330. The segment at 337–370 (PVNCVLCPNAGGAFKQTDHGQWAHVVCALWIPEV) adopts a C2HC pre-PHD-type zinc-finger fold. The PHD-type 2 zinc-finger motif lies at 394 to 457 (LTCYVCKEKG…QKFAYCHAHT (64 aa)). A Bromo domain is found at 611 to 715 (LQLNPLEAAL…DQAAPLFVQV (105 aa)). Residues 796–805 (KARFAARHSS) show a composition bias toward basic residues. 4 disordered regions span residues 796-887 (KARF…SSPV), 901-942 (AQAA…TTAA), 1012-1054 (ANLP…QALP), and 1076-1301 (QRDV…GQKP). The segment covering 842–857 (HDDDDEEEDSDEDSMG) has biased composition (acidic residues). Over residues 865 to 887 (LLNSTQTPPCSPIKSLNNSSSPV) the composition is skewed to polar residues. Composition is skewed to low complexity over residues 922 to 942 (NSQS…TTAA), 1034 to 1043 (SSSMSPKKSP), and 1085 to 1107 (APSQ…SCSD). The span at 1108-1120 (FDSDEASEGDADG) shows a compositional bias: acidic residues. A compositionally biased stretch (basic and acidic residues) spans 1121 to 1137 (DPDRDGGRSRSEERDST). 2 stretches are compositionally biased toward polar residues: residues 1151 to 1165 (ASLN…NMAI) and 1265 to 1278 (NTTA…TNNN). Over residues 1281–1293 (KHSEDSASSERHN) the composition is skewed to basic and acidic residues. One can recognise a PWWP domain in the interval 1305-1378 (PLQLVWAKCR…TWQWLPANKL (74 aa)).

As to quaternary structure, component of the Enok complex composed of at least Br140, enok, Eaf6 and Ing5. As part of the Enok complex, interacts with elg1 and the Elg1 RFC-like complex.

Its subcellular location is the nucleus. Functionally, scaffold subunit of the histone acetyltransferase (HAT) Enok complex which has histone H3 acetyltransferase activity. As part of the Enok complex, associates with the Elg1 RFC-like complex and down-regulates its PCNA-unloading function to promote the G1/S transition. May also play a role in maintaining the protein levels and stability of enok. The sequence is that of Bromodomain-containing protein homolog from Drosophila melanogaster (Fruit fly).